The primary structure comprises 219 residues: Protein-L-isoaspartate O-methyltransferase 2 (219 aa).

Ser67 is a catalytic residue.

Belongs to the methyltransferase superfamily. L-isoaspartyl/D-aspartyl protein methyltransferase family.

It is found in the cytoplasm. It carries out the reaction [protein]-L-isoaspartate + S-adenosyl-L-methionine = [protein]-L-isoaspartate alpha-methyl ester + S-adenosyl-L-homocysteine. In terms of biological role, catalyzes the methyl esterification of L-isoaspartyl residues in peptides and proteins that result from spontaneous decomposition of normal L-aspartyl and L-asparaginyl residues. It plays a role in the repair and/or degradation of damaged proteins. This Nitrosococcus oceani (strain ATCC 19707 / BCRC 17464 / JCM 30415 / NCIMB 11848 / C-107) protein is Protein-L-isoaspartate O-methyltransferase 2.